Consider the following 345-residue polypeptide: uncharacterized protein (345 aa).

A CNNM transmembrane domain is found at 1-198; that stretch reads MDVLSAVLLA…LSEGLLDHEE (198 aa). The next 2 helical transmembrane spans lie at 3 to 23 and 95 to 115; these read VLSA…FVGA and VPPA…HVLL. 2 CBS domains span residues 217–280 and 285–342; these read AVPL…PQTV and VVRP…MRDG. The chain crosses the membrane as a helical span at residues 312-332; it reads LALVTADNGSVVGMVALEDVV.

Belongs to the TerC family.

It is found in the cell membrane. This is an uncharacterized protein from Mycobacterium tuberculosis (strain CDC 1551 / Oshkosh).